The following is a 316-amino-acid chain: 4-diphosphocytidyl-2-C-methyl-D-erythritol kinase (316 aa).

Lys-32 is a catalytic residue. Residue 126–136 participates in ATP binding; the sequence is PVGAGLGGGSA. Residue Asp-168 is part of the active site.

It belongs to the GHMP kinase family. IspE subfamily.

It carries out the reaction 4-CDP-2-C-methyl-D-erythritol + ATP = 4-CDP-2-C-methyl-D-erythritol 2-phosphate + ADP + H(+). It functions in the pathway isoprenoid biosynthesis; isopentenyl diphosphate biosynthesis via DXP pathway; isopentenyl diphosphate from 1-deoxy-D-xylulose 5-phosphate: step 3/6. Catalyzes the phosphorylation of the position 2 hydroxy group of 4-diphosphocytidyl-2C-methyl-D-erythritol. The sequence is that of 4-diphosphocytidyl-2-C-methyl-D-erythritol kinase from Bifidobacterium longum (strain DJO10A).